The sequence spans 78 residues: Acyl carrier protein (78 aa).

One can recognise a Carrier domain in the interval 2 to 77 (SNIEQQVKKI…LAIDYINAHN (76 aa)). Serine 37 is subject to O-(pantetheine 4'-phosphoryl)serine.

It belongs to the acyl carrier protein (ACP) family. In terms of processing, 4'-phosphopantetheine is transferred from CoA to a specific serine of apo-ACP by AcpS. This modification is essential for activity because fatty acids are bound in thioester linkage to the sulfhydryl of the prosthetic group.

The protein resides in the cytoplasm. The protein operates within lipid metabolism; fatty acid biosynthesis. Carrier of the growing fatty acid chain in fatty acid biosynthesis. The polypeptide is Acyl carrier protein (Neisseria gonorrhoeae (strain ATCC 700825 / FA 1090)).